Consider the following 249-residue polypeptide: Homeobox protein TGIF2LX (249 aa).

2 disordered regions span residues 1–65 and 126–199; these read MEAA…GYSP and DPIV…PKKK. The segment covering 9-27 has biased composition (basic and acidic residues); it reads AETRSRVEKDSRRAIKDSP. The span at 28–46 shows a compositional bias: polar residues; sequence AKTQSPAQDTSIMLRNNAD. Residues 55–118 constitute a DNA-binding region (homeobox; TALE-type); the sequence is EHKKKRKGYS…INARRRILPD (64 aa). Residues 159–172 show a composition bias toward polar residues; that stretch reads DNVQSLPLRSSPKG.

It belongs to the TALE/TGIF homeobox family.

The protein resides in the nucleus. In terms of biological role, may have a transcription role in testis. The chain is Homeobox protein TGIF2LX (TGIF2LX) from Macaca mulatta (Rhesus macaque).